A 390-amino-acid polypeptide reads, in one-letter code: GTPase Obg (390 aa).

In terms of domain architecture, Obg spans 1 to 159 (MKFVDEATIK…RELRLELLLL (159 aa)). In terms of domain architecture, OBG-type G spans 160–333 (ADVGMLGLPN…LCDELADFMD (174 aa)). Residues 166–173 (GLPNAGKS), 191–195 (FTTLI), 213–216 (DIPG), 283–286 (NKTD), and 314–316 (AAV) contribute to the GTP site. Mg(2+) contacts are provided by Ser-173 and Thr-193.

The protein belongs to the TRAFAC class OBG-HflX-like GTPase superfamily. OBG GTPase family. Monomer. Mg(2+) serves as cofactor.

The protein localises to the cytoplasm. An essential GTPase which binds GTP, GDP and possibly (p)ppGpp with moderate affinity, with high nucleotide exchange rates and a fairly low GTP hydrolysis rate. Plays a role in control of the cell cycle, stress response, ribosome biogenesis and in those bacteria that undergo differentiation, in morphogenesis control. The polypeptide is GTPase Obg (Aliivibrio fischeri (strain ATCC 700601 / ES114) (Vibrio fischeri)).